The following is a 274-amino-acid chain: Thiamine kinase (274 aa).

It belongs to the thiamine kinase family.

The catalysed reaction is thiamine + ATP = thiamine phosphate + ADP + H(+). The protein operates within cofactor biosynthesis; thiamine diphosphate biosynthesis; thiamine phosphate from thiamine: step 1/1. Catalyzes the ATP-dependent phosphorylation of thiamine to thiamine phosphate. Is involved in thiamine salvage. This Salmonella choleraesuis (strain SC-B67) protein is Thiamine kinase.